Consider the following 378-residue polypeptide: Histidine decarboxylase (378 aa).

A substrate-binding site is contributed by His-120. N6-(pyridoxal phosphate)lysine is present on Lys-233.

The protein belongs to the group II decarboxylase family. Homotetramer. The cofactor is pyridoxal 5'-phosphate.

The catalysed reaction is L-histidine + H(+) = histamine + CO2. This is Histidine decarboxylase (hdc) from Klebsiella aerogenes (Enterobacter aerogenes).